Here is a 138-residue protein sequence, read N- to C-terminus: Putative pre-16S rRNA nuclease (138 aa).

This sequence belongs to the YqgF nuclease family.

It is found in the cytoplasm. Could be a nuclease involved in processing of the 5'-end of pre-16S rRNA. This Caldicellulosiruptor bescii (strain ATCC BAA-1888 / DSM 6725 / KCTC 15123 / Z-1320) (Anaerocellum thermophilum) protein is Putative pre-16S rRNA nuclease.